A 250-amino-acid polypeptide reads, in one-letter code: Keratin-associated protein 9-1 (250 aa).

32 repeat units span residues 8-12 (CCQPT), 13-17 (CCRTT), 18-22 (CCRTT), 37-41 (CCQPS), 42-46 (CCVPS), 51-55 (CCHPT), 56-60 (CCQNT), 61-65 (CCRTT), 66-70 (CCQPT), 75-79 (CCQPS), 80-84 (CCSTP), 85-89 (CCQPT), 90-94 (CCGSS), 95-99 (CCGQT), 105-109 (CCQPI), 114-117 (CCQP), 118-121 (CCHP), 133-137 (CCQPT), 138-142 (CCQPT), 143-147 (CCRNT), 153-157 (CCGSS), 162-166 (CCHPT), 167-171 (CCQTI), 176-180 (CCQPS), 185-189 (CCSTP), 190-194 (CCQPT), 214-218 (CCRPT), 219-223 (CCQTT), 229-233 (CCRPS), 234-238 (CCCSP), 239-243 (CCVSS), and 244-248 (CCQPS). The segment at 8-248 (CCQPTCCRTT…CCVSSCCQPS (241 aa)) is 32 X 5 AA repeats of C-C-[CGSVRQH]-[SQTNP]-[PTSI].

Belongs to the KRTAP type 9 family. In terms of assembly, interacts with hair keratins.

Its function is as follows. In the hair cortex, hair keratin intermediate filaments are embedded in an interfilamentous matrix, consisting of hair keratin-associated proteins (KRTAP), which are essential for the formation of a rigid and resistant hair shaft through their extensive disulfide bond cross-linking with abundant cysteine residues of hair keratins. The matrix proteins include the high-sulfur and high-glycine-tyrosine keratins. The sequence is that of Keratin-associated protein 9-1 from Homo sapiens (Human).